The following is a 720-amino-acid chain: MFNKHSVEIDWGGRPLKLETGKIARQADGAVVATYGETVVLATVVAAKAPREGVDFLPLTVDYQEKTYAAGRIPGGYFKREGRPTEKETLVSRLIDRPIRPLFVDGWRNETQVIATVLSHDMENDPDIVALVASSAALTLSGAPFKGPIGAARVGFVNDEYVLNPTLDEMVDTQLDLVVAGTADAVLMVESEAKELNEDIMLGAVMFGHRHFQPVINAIIELAEKAAKEPREVTVIDNAALEKEMLGLVEQELRAAYAIPVKQDRYAAVGKVKEKVIAHYFPEGQEPKYDKLRIAGVFKELEAKIVRWNILDTGKRIDGRDSKTVRNIIAEVGVLPRAHGSALFTRGETQAMVVTTLGTGEDEQYIDALSGTYKETFLLHYNFPPYSVGETGRLGGTKRREIGHGKLAWRAIHPVLPPHHEFPYTIRVVSEITESNGSSSMASVCGASLALMDAGVPLKRPTAGIAMGLILEDKRFAVLSDILGDEDHLGDMDFKVAGTESGITSLQMDIKIEGITEEIMKVALGQAKDGRIHILGEMAKALTNARAELGEYAPRIETFKIPTDKIREVIGTGGKVIREIVEKTGAKVNIEDDGTVKVASSDGEAMKAAIKWIKSIASEPEVGQIYDGTVVKVMEFGAFVNFFGSKDGLVHISQLASARVQKTSDVVKEGDKVKVKLLGFDDRGKTRLSMKVVDQTTGEDLEAKDKVAEGEKAPREAAGE.

Residues aspartate 487 and aspartate 493 each contribute to the Mg(2+) site. The region spanning proline 554–isoleucine 613 is the KH domain. Residues glycine 623 to lysine 691 enclose the S1 motif domain. The segment at glutamate 699–glutamate 720 is disordered. Basic and acidic residues predominate over residues leucine 701–glutamate 720.

The protein belongs to the polyribonucleotide nucleotidyltransferase family. Requires Mg(2+) as cofactor.

Its subcellular location is the cytoplasm. The catalysed reaction is RNA(n+1) + phosphate = RNA(n) + a ribonucleoside 5'-diphosphate. Its function is as follows. Involved in mRNA degradation. Catalyzes the phosphorolysis of single-stranded polyribonucleotides processively in the 3'- to 5'-direction. The polypeptide is Polyribonucleotide nucleotidyltransferase (Bradyrhizobium diazoefficiens (strain JCM 10833 / BCRC 13528 / IAM 13628 / NBRC 14792 / USDA 110)).